The following is a 423-amino-acid chain: G protein-activated inward rectifier potassium channel 2 (423 aa).

Over 1–89 the chain is Cytoplasmic; it reads MAKLTESMTN…IFTTLVDLKW (89 aa). Phosphoserine occurs at positions 16 and 23. A helical transmembrane segment spans residues 90–114; that stretch reads RFNLLIFVMVYTVTWLFFGMIWWLI. Over 115-138 the chain is Extracellular; that stretch reads AYIRGDMDHIEDPSWTPCVTNLNG. Positions 139 to 150 form an intramembrane region, helical; Pore-forming; the sequence is FVSAFLFSIETE. An intramembrane region (pore-forming) is located at residues 151-157; sequence TTIGYGY. A Selectivity filter motif is present at residues 152–157; sequence TIGYGY. Over 158 to 166 the chain is Extracellular; sequence RVITDKCPE. A helical transmembrane segment spans residues 167–188; the sequence is GIILLLIQSVLGSIVNAFMVGC. Topologically, residues 189–423 are cytoplasmic; that stretch reads MFVKISQPKK…VANLENESKV (235 aa). Residues 390 to 423 are disordered; sequence NQHAELETEEEEKNLEEQTERNGDVANLENESKV. The PDZ-binding signature appears at 420 to 423; that stretch reads ESKV.

It belongs to the inward rectifier-type potassium channel (TC 1.A.2.1) family. KCNJ6 subfamily. Associates with KCNJ3/GIRK1 or KCNJ5/GRIK4 to form a G-protein-activated heteromultimer pore-forming unit. The resulting inward current is much larger. Interacts (via PDZ-binding motif) with SNX27 (via PDZ domain); the interaction is required when endocytosed to prevent degradation in lysosomes and promote recycling to the plasma membrane. Most abundant in cerebellum, and to a lesser degree in islets and exocrine pancreas.

The protein localises to the membrane. It carries out the reaction K(+)(in) = K(+)(out). Activated by phosphatidylinositol 4,5 biphosphate (PtdIns(4,5)P2). Functionally, inward rectifier potassium channels are characterized by a greater tendency to allow potassium to flow into the cell rather than out of it. Their voltage dependence is regulated by the concentration of extracellular potassium; as external potassium is raised, the voltage range of the channel opening shifts to more positive voltages. The inward rectification is mainly due to the blockage of outward current by internal magnesium. This potassium channel may be involved in the regulation of insulin secretion by glucose and/or neurotransmitters acting through G-protein-coupled receptors. The chain is G protein-activated inward rectifier potassium channel 2 (KCNJ6) from Homo sapiens (Human).